The sequence spans 59 residues: Small EDRK-rich factor 2 (59 aa).

Basic and acidic residues-rich tracts occupy residues 1–30 (MTRG…RDDG) and 50–59 (KANEKKEEPK). Residues 1 to 59 (MTRGNQRELARQKNMKKQSDSVKGKRRDDGLSAAARKQRDSEIMQQKQKKANEKKEEPK) are disordered.

The protein belongs to the SERF family.

Positive regulator of amyloid protein aggregation and proteotoxicity. Induces conformational changes in amyloid proteins, such as HTT, driving them into compact formations preceding the formation of aggregates. This is Small EDRK-rich factor 2 (SERF2) from Plecturocebus moloch (Dusky titi monkey).